A 377-amino-acid polypeptide reads, in one-letter code: tRNA-queuosine alpha-mannosyltransferase (377 aa).

It belongs to the glycosyltransferase group 1 family. Glycosyltransferase 4 subfamily.

The catalysed reaction is queuosine(34) in tRNA(Asp) + GDP-alpha-D-mannose = O-4''-alpha-D-mannosylqueuosine(34) in tRNA(Asp) + GDP + H(+). Functionally, glycosyltransferase that specifically catalyzes mannosylation of cytoplasmic tRNA(Asp) modified with queuosine at position 34 (queuosine(34)). Mannosylates the cyclopentene moiety of queuosine(34) in tRNA(Asp) to form mannosyl-queuosine(34). The sequence is that of tRNA-queuosine alpha-mannosyltransferase from Drosophila melanogaster (Fruit fly).